Reading from the N-terminus, the 488-residue chain is E3 ubiquitin-protein ligase TRIM39 (488 aa).

The RING-type zinc-finger motif lies at 29–70 (CSVCLEYLKEPVIIECGHNFCKACITRWWEDLERDFPCPVCR). The B box-type zinc-finger motif lies at 102–143 (RDESLCSQHHEPLSLFCYEDQEAVCLICAISHTHRAHTVVPM). Residues cysteine 107, histidine 110, cysteine 129, and histidine 135 each coordinate Zn(2+). Residues 181-250 (ELKRLVESRR…AHLAAEVEGK (70 aa)) adopt a coiled-coil conformation. Interaction with CDKN1A stretches follow at residues 268 to 307 (KCEK…QLIA) and 359 to 488 (TSGR…TDWE). Positions 289–484 (SHFPRQYFAL…NAAPLTIRPP (196 aa)) constitute a B30.2/SPRY domain.

The protein belongs to the TRIM/RBCC family. As to quaternary structure, interacts with MOAP1. Interacts with CDKN1A. In terms of processing, autoubiquitinated.

The protein resides in the cytoplasm. The protein localises to the cytosol. It localises to the mitochondrion. It is found in the nucleus. The catalysed reaction is S-ubiquitinyl-[E2 ubiquitin-conjugating enzyme]-L-cysteine + [acceptor protein]-L-lysine = [E2 ubiquitin-conjugating enzyme]-L-cysteine + N(6)-ubiquitinyl-[acceptor protein]-L-lysine.. It functions in the pathway protein modification; protein ubiquitination. Functionally, E3 ubiquitin-protein ligase. May facilitate apoptosis by inhibiting APC/C-Cdh1-mediated poly-ubiquitination and subsequent proteasome-mediated degradation of the pro-apoptotic protein MOAP1. Regulates the G1/S transition of the cell cycle and DNA damage-induced G2 arrest by stabilizing CDKN1A/p21. Positively regulates CDKN1A/p21 stability by competing with DTL for CDKN1A/p21 binding, therefore disrupting DCX(DTL) E3 ubiquitin ligase complex-mediated CDKN1A/p21 ubiquitination and degradation. This is E3 ubiquitin-protein ligase TRIM39 (Trim39) from Rattus norvegicus (Rat).